Here is a 256-residue protein sequence, read N- to C-terminus: Ribonuclease 3 (256 aa).

The RNase III domain maps to 3–125 (LDALQQRLGY…IVGAVFLDAG (123 aa)). Glutamate 38 serves as a coordination point for Mg(2+). The active site involves aspartate 42. Mg(2+) is bound by residues aspartate 111 and glutamate 114. The active site involves glutamate 114. The 71-residue stretch at 152-222 (DAKTLLQEYL…AKLALDEVQK (71 aa)) folds into the DRBM domain. A disordered region spans residues 229–256 (KRSRAERTGKTRKQPVPPDPQLSLRLKE).

Belongs to the ribonuclease III family. In terms of assembly, homodimer. Mg(2+) serves as cofactor.

The protein resides in the cytoplasm. It carries out the reaction Endonucleolytic cleavage to 5'-phosphomonoester.. Digests double-stranded RNA. Involved in the processing of primary rRNA transcript to yield the immediate precursors to the large and small rRNAs (23S and 16S). Processes some mRNAs, and tRNAs when they are encoded in the rRNA operon. Processes pre-crRNA and tracrRNA of type II CRISPR loci if present in the organism. This Cupriavidus pinatubonensis (strain JMP 134 / LMG 1197) (Cupriavidus necator (strain JMP 134)) protein is Ribonuclease 3.